Here is an 899-residue protein sequence, read N- to C-terminus: Proline-rich transmembrane protein 4 (899 aa).

An N-terminal signal peptide occupies residues 1–23 (MARHGCLGLGLFCCVLFAATVGP). Disordered stretches follow at residues 110–152 (LTEW…RRST) and 295–340 (TVPI…PEAP). The next 5 helical transmembrane spans lie at 370–390 (VGAL…LLPW), 392–412 (CPPG…AGTT), 430–450 (ALAW…GLGL), 467–487 (LAAL…GSAA), and 500–520 (GLHA…SCWG). Phosphoserine is present on serine 641. Disordered stretches follow at residues 769-797 (TGGR…AWPA) and 839-869 (PSGS…ASEL). Residues 840-851 (SGSSPSLPASGS) are compositionally biased toward low complexity.

It is found in the membrane. This chain is Proline-rich transmembrane protein 4 (PRRT4), found in Homo sapiens (Human).